Reading from the N-terminus, the 447-residue chain is MNAWEVNFDGLVGLTHHYAGLSFGNEASTRHRFQISNPRLAAKQGLLKMKNLADAGFPQAVIPPHERPFIPVLRQLGFSGSDEQVLEKVARQAPHWLSSVSSASPMWVANAATIAPSADTLDGKVHLTIANLNNKFHRSLEAPVTESLLKAIFDDEEKFSVHSALPQVALLGDEGAANHNRLGGHYGEPGMQLFVYGREEGNDTRPSRYPARQTREASEAVARLNQVNPQQVIFAQQNPDVIDQGVFHNDVIAVSNRQVLFCHQQAFARQVQLLANLRARVNGFMAIEVPATQVSVSDAVSTYLFNSQLLSRDDGSMMLVLPQECREHAGVWGYLNELLVADNPISELKVFDLRESMANGGGPACLRLRVVLTEEERRAVNPAVMMNDTLFNALNDWVDRYYRDRLTAADLADPQLLREGREALDVLSQLLNLGSVYPFQREGGGNG.

Substrate contacts are provided by residues 19–28, Asn-110, and 137–138; these read AGLSFGNEAS and HR. Glu-174 is an active-site residue. Arg-212 lines the substrate pocket. His-248 is a catalytic residue. The substrate site is built by Asp-250 and Asn-359. Cys-365 serves as the catalytic Nucleophile.

This sequence belongs to the succinylarginine dihydrolase family. Homodimer.

The catalysed reaction is N(2)-succinyl-L-arginine + 2 H2O + 2 H(+) = N(2)-succinyl-L-ornithine + 2 NH4(+) + CO2. It participates in amino-acid degradation; L-arginine degradation via AST pathway; L-glutamate and succinate from L-arginine: step 2/5. Its function is as follows. Catalyzes the hydrolysis of N(2)-succinylarginine into N(2)-succinylornithine, ammonia and CO(2). In Escherichia coli (strain SMS-3-5 / SECEC), this protein is N-succinylarginine dihydrolase.